Here is a 279-residue protein sequence, read N- to C-terminus: Digeranylgeranylglyceryl phosphate synthase (279 aa).

Transmembrane regions (helical) follow at residues 14–34 (VKNCLTASFGTIIGGLIASNF), 36–56 (FGLIGYILLASLIVFLVCGFG), 94–114 (LMISGIIISLFNMICFAIALI), 131–153 (IIGNLIVAYLTGSIFIFGGASVG), 157–175 (ITLILFLCALFATWSREII), 201–221 (IFVAIGFLLCSILLSPLPYIL), 224–244 (FGAPYLMAIMICNVLFILAVL), and 259–279 (SKYIKIIMNLVLLSFVIGSLM).

Belongs to the UbiA prenyltransferase family. DGGGP synthase subfamily. The cofactor is Mg(2+).

Its subcellular location is the cell membrane. The catalysed reaction is sn-3-O-(geranylgeranyl)glycerol 1-phosphate + (2E,6E,10E)-geranylgeranyl diphosphate = 2,3-bis-O-(geranylgeranyl)-sn-glycerol 1-phosphate + diphosphate. Its pathway is membrane lipid metabolism; glycerophospholipid metabolism. Functionally, prenyltransferase that catalyzes the transfer of the geranylgeranyl moiety of geranylgeranyl diphosphate (GGPP) to the C2 hydroxyl of (S)-3-O-geranylgeranylglyceryl phosphate (GGGP). This reaction is the second ether-bond-formation step in the biosynthesis of archaeal membrane lipids. In Methanococcus aeolicus (strain ATCC BAA-1280 / DSM 17508 / OCM 812 / Nankai-3), this protein is Digeranylgeranylglyceryl phosphate synthase.